The sequence spans 84 residues: MKGMILFISCLLLIGIVVECKEGYLMDHEGCKLSCFIRPSGYCGSECKIKKGSSGYCAWPACYCYGLPNWVKVWERATNRCGKK.

Positions M1–C20 are cleaved as a signal peptide. An LCN-type CS-alpha/beta domain is found at K21–G82. 4 disulfides stabilise this stretch: C31–C81, C35–C57, C43–C62, and C47–C64. Residue C81 is modified to Cysteine amide.

Belongs to the long (4 C-C) scorpion toxin superfamily. Sodium channel inhibitor family. Beta subfamily. As to expression, expressed by the venom gland.

It is found in the secreted. Beta toxins bind voltage-independently at site-4 of sodium channels (Nav) and shift the voltage of activation toward more negative potentials thereby affecting sodium channel activation and promoting spontaneous and repetitive firing. The toxin induces a leftward shift, on all channels tested (including Blattella germanica and Varroa destructor Nav1), displacing a change in voltage dependence activation to more hyperpolarized potentials. In addition, the toxin mostly inhibits peak current of hNav1.4/SCN4A (53% inhibition of peak current at 100 nM) and hNav1.5/SCN5A (71% inhibition). This Tityus fasciolatus (Central Brazilian scorpion) protein is Beta-toxin Tf1a.